The primary structure comprises 510 residues: Glutamate decarboxylase (510 aa).

Residue 107–109 participates in substrate binding; it reads QLS. An N6-(pyridoxal phosphate)lysine modification is found at Lys322. Residue Arg483 coordinates substrate.

The protein belongs to the group II decarboxylase family. Homodimer. The cofactor is pyridoxal 5'-phosphate. In terms of tissue distribution, expressed in the head (at protein level).

It catalyses the reaction L-glutamate + H(+) = 4-aminobutanoate + CO2. Functionally, catalyzes the production of GABA. The protein is Glutamate decarboxylase (Gad1) of Drosophila melanogaster (Fruit fly).